Consider the following 313-residue polypeptide: Porphobilinogen deaminase (313 aa).

C242 is subject to S-(dipyrrolylmethanemethyl)cysteine.

Belongs to the HMBS family. In terms of assembly, monomer. Requires dipyrromethane as cofactor.

It carries out the reaction 4 porphobilinogen + H2O = hydroxymethylbilane + 4 NH4(+). It functions in the pathway porphyrin-containing compound metabolism; protoporphyrin-IX biosynthesis; coproporphyrinogen-III from 5-aminolevulinate: step 2/4. In terms of biological role, tetrapolymerization of the monopyrrole PBG into the hydroxymethylbilane pre-uroporphyrinogen in several discrete steps. In Pectobacterium carotovorum subsp. carotovorum (strain PC1), this protein is Porphobilinogen deaminase.